A 276-amino-acid chain; its full sequence is Undecaprenyl-diphosphatase 1 (276 aa).

The next 5 membrane-spanning stretches (helical) occupy residues 85–105, 108–128, 187–207, 217–237, and 253–273; these read MNVV…EKTI, VLFA…VILW, VATE…TLYE, VDSI…AFAC, and FAWY…SGWI.

The protein belongs to the UppP family.

The protein resides in the cell inner membrane. It carries out the reaction di-trans,octa-cis-undecaprenyl diphosphate + H2O = di-trans,octa-cis-undecaprenyl phosphate + phosphate + H(+). In terms of biological role, catalyzes the dephosphorylation of undecaprenyl diphosphate (UPP). Confers resistance to bacitracin. This Burkholderia thailandensis (strain ATCC 700388 / DSM 13276 / CCUG 48851 / CIP 106301 / E264) protein is Undecaprenyl-diphosphatase 1.